The sequence spans 309 residues: Replication factor C subunit 4 (309 aa).

ATP contacts are provided by residues Val-5, Val-17, 42-50, Asn-134, and Arg-192; that span reads GPPGTGKTT.

It belongs to the activator 1 small subunits family. As to quaternary structure, component of the replication factor C (RFC) complex.

The protein resides in the nucleus. Its function is as follows. Component of ATP-dependent clamp loader (RFC and RFC-like) complexes for DNA clamps. During a clamp loading circle, the RFC:clamp complex binds to DNA and the recognition of the double-stranded/single-stranded junction stimulates ATP hydrolysis by RFC. The complex presumably provides bipartite ATP sites in which one subunit supplies a catalytic site for hydrolysis of ATP bound to the neighboring subunit. Dissociation of RFC from the clamp leaves the clamp encircling DNA. Component of the replication factor C (RFC or activator 1) complex which acts during elongation of primed DNA templates by DNA polymerase delta and epsilon. RFC has an essential but redundant activity in sister chromatid cohesion establishment. The sequence is that of Replication factor C subunit 4 (RFC4) from Encephalitozoon cuniculi (strain GB-M1) (Microsporidian parasite).